The following is a 286-amino-acid chain: Aminoglycoside N(3)-acetyltransferase VIII (286 aa).

Belongs to the antibiotic N-acetyltransferase family.

The catalysed reaction is a 2-deoxystreptamine antibiotic + acetyl-CoA = an N(3)-acetyl-2-deoxystreptamine antibiotic + CoA + H(+). Functionally, resistance to neomycin. The sequence is that of Aminoglycoside N(3)-acetyltransferase VIII (aacC8) from Streptomyces fradiae (Streptomyces roseoflavus).